Consider the following 819-residue polypeptide: Leucine--tRNA ligase (819 aa).

Residues 41 to 51 (PYPSGTLHVGH) carry the 'HIGH' region motif. A 'KMSKS' region motif is present at residues 578 to 582 (KMSKS). Lys581 contributes to the ATP binding site.

This sequence belongs to the class-I aminoacyl-tRNA synthetase family.

Its subcellular location is the cytoplasm. The catalysed reaction is tRNA(Leu) + L-leucine + ATP = L-leucyl-tRNA(Leu) + AMP + diphosphate. The chain is Leucine--tRNA ligase from Fervidobacterium nodosum (strain ATCC 35602 / DSM 5306 / Rt17-B1).